The primary structure comprises 196 residues: Heat shock protein beta-8 (196 aa).

The disordered stretch occupies residues 1–28 (MADGQLPFPCSYPSRLRRDPFRDSPLSS). Residues Ser24 and Ser57 each carry the phosphoserine modification. Thr63 carries the post-translational modification Phosphothreonine. An asymmetric dimethylarginine mark is found at Arg71 and Arg78. The region spanning 74 to 185 (TATARFGVPA…PFGESSFNNE (112 aa)) is the sHSP domain. The interval 176-196 (PFGESSFNNELPQDNQEVTCS) is disordered. A compositionally biased stretch (polar residues) spans 178 to 196 (GESSFNNELPQDNQEVTCS).

This sequence belongs to the small heat shock protein (HSP20) family. As to quaternary structure, monomer. Forms a ternary complex with BAG3 and HSPA1A. Component of the chaperone-assisted selective autophagy (CASA) complex consisting of BAG3, HSPA8/HSC70, HSPB8 and STUB1/CHIP. Interacts with HSPB1. Interacts with DNAJB6. Interacts with BAG3. Phosphorylated.

It localises to the cytoplasm. The protein localises to the nucleus. In terms of biological role, involved in the chaperone-assisted selective autophagy (CASA), a crucial process for protein quality control, particularly in mechanical strained cells and tissues such as muscle. Displays temperature-dependent chaperone activity. The protein is Heat shock protein beta-8 (Hspb8) of Rattus norvegicus (Rat).